Consider the following 249-residue polypeptide: MSASHALILLRHGNSEWNRQNLFTGWVDVRLSEQGVAEAKRAGELLAESGLVPDILYTSLLTRAIQTANHALDAADRLWIPVVRSWRLNERHYGALQGLDKAETLEKYGPEQFQLWRRSFDVPPPPLADDSEWSQADDPRYADLGADLPRTECLKDVIARMLPFWESDITTSLSAGKTVLVTAHGNSLRALVKHLDGISDDDIAELNIPTGVPLVYKLDDSFKPVEPAAYLDPEAAAVGAAAVAAQGKK.

Residues 11–18 (RHGNSEWN), 24–25 (TG), Arg63, 90–93 (ERHY), Lys101, 117–118 (RR), and 185–186 (GN) contribute to the substrate site. The Tele-phosphohistidine intermediate role is filled by His12. Glu90 (proton donor/acceptor) is an active-site residue.

It belongs to the phosphoglycerate mutase family. BPG-dependent PGAM subfamily.

The enzyme catalyses (2R)-2-phosphoglycerate = (2R)-3-phosphoglycerate. It functions in the pathway carbohydrate degradation; glycolysis; pyruvate from D-glyceraldehyde 3-phosphate: step 3/5. In terms of biological role, catalyzes the interconversion of 2-phosphoglycerate and 3-phosphoglycerate. The polypeptide is 2,3-bisphosphoglycerate-dependent phosphoglycerate mutase (Leifsonia xyli subsp. xyli (strain CTCB07)).